Here is a 316-residue protein sequence, read N- to C-terminus: MQILLANPRGFCAGVDRAISIVENALAIYGAPIYVRHEVVHNRYVVDSLRQRGAIFIEQISEVPDGAILIFSAHGVSQAVRNEAKSRDLTVFDATCPLVTKVHMEVARASRRGEESILIGHAGHPEVEGTMGQYSNPEGGMYLVESPEDVWTLNVKNEGKLSFMTQTTLSVDDTSDVIDALRKRFPKIVGPRKDDICYATTNRQEAVRALAEQADVVLVVGSKNSSNSNRLAELAQRMGRTAFLIDDAADIQEAWVKEAACVGVTAGASAPDILVQNVIARLREFGGGEAVTLEGREENIVFEVPKELRVDVREVE.

[4Fe-4S] cluster is bound at residue cysteine 12. 2 residues coordinate (2E)-4-hydroxy-3-methylbut-2-enyl diphosphate: histidine 41 and histidine 74. Dimethylallyl diphosphate-binding residues include histidine 41 and histidine 74. Residues histidine 41 and histidine 74 each contribute to the isopentenyl diphosphate site. Residue cysteine 96 participates in [4Fe-4S] cluster binding. Histidine 124 serves as a coordination point for (2E)-4-hydroxy-3-methylbut-2-enyl diphosphate. Dimethylallyl diphosphate is bound at residue histidine 124. An isopentenyl diphosphate-binding site is contributed by histidine 124. Glutamate 126 (proton donor) is an active-site residue. Threonine 167 serves as a coordination point for (2E)-4-hydroxy-3-methylbut-2-enyl diphosphate. Cysteine 197 is a [4Fe-4S] cluster binding site. (2E)-4-hydroxy-3-methylbut-2-enyl diphosphate-binding residues include serine 225, serine 226, asparagine 227, and serine 269. 4 residues coordinate dimethylallyl diphosphate: serine 225, serine 226, asparagine 227, and serine 269. Serine 225, serine 226, asparagine 227, and serine 269 together coordinate isopentenyl diphosphate.

Belongs to the IspH family. Homodimer. Requires [4Fe-4S] cluster as cofactor.

It catalyses the reaction isopentenyl diphosphate + 2 oxidized [2Fe-2S]-[ferredoxin] + H2O = (2E)-4-hydroxy-3-methylbut-2-enyl diphosphate + 2 reduced [2Fe-2S]-[ferredoxin] + 2 H(+). It carries out the reaction dimethylallyl diphosphate + 2 oxidized [2Fe-2S]-[ferredoxin] + H2O = (2E)-4-hydroxy-3-methylbut-2-enyl diphosphate + 2 reduced [2Fe-2S]-[ferredoxin] + 2 H(+). It functions in the pathway isoprenoid biosynthesis; dimethylallyl diphosphate biosynthesis; dimethylallyl diphosphate from (2E)-4-hydroxy-3-methylbutenyl diphosphate: step 1/1. The protein operates within isoprenoid biosynthesis; isopentenyl diphosphate biosynthesis via DXP pathway; isopentenyl diphosphate from 1-deoxy-D-xylulose 5-phosphate: step 6/6. Its function is as follows. Catalyzes the conversion of 1-hydroxy-2-methyl-2-(E)-butenyl 4-diphosphate (HMBPP) into a mixture of isopentenyl diphosphate (IPP) and dimethylallyl diphosphate (DMAPP). Acts in the terminal step of the DOXP/MEP pathway for isoprenoid precursor biosynthesis. This is 4-hydroxy-3-methylbut-2-enyl diphosphate reductase from Salmonella agona (strain SL483).